The primary structure comprises 1096 residues: Pentatricopeptide repeat-containing protein At5g55840 (1096 aa).

PPR repeat units follow at residues 122-156 (NPSV…GFNP), 157-191 (SVYT…KICP), 192-226 (DVAT…GYAP), 227-261 (TIVT…GVDA), 262-296 (DVCT…MIHP), 297-331 (NEVT…GLSP), 332-366 (NHVT…GLTP), 367-401 (SEVS…GVCV), 402-436 (GRIT…GIDP), 437-471 (DIVT…GLSP), 472-506 (NGII…GHTR), 507-541 (DHFT…GILP), 542-576 (NTVS…GHHP), 577-607 (TFFT…LHAV), 612-646 (DTVM…SILP), 647-681 (DSYT…GNVL), 683-717 (NKVM…GHTP), 718-752 (DIVT…NGGP), 753-787 (NLTT…GILP), 788-822 (DKLT…GVEV), 823-857 (DRYT…GISL), 858-892 (DKDT…GISP), 893-927 (ESRK…KICP), 928-962 (PNVA…KLVP), 963-997 (TIAS…GLKL), 998-1032 (DLVS…GFLA), and 1033-1068 (NATT…GFIT).

It belongs to the PPR family. P subfamily.

The polypeptide is Pentatricopeptide repeat-containing protein At5g55840 (Arabidopsis thaliana (Mouse-ear cress)).